A 159-amino-acid chain; its full sequence is 6,7-dimethyl-8-ribityllumazine synthase (159 aa).

Residues Phe23, 61–63 (SFE), and 85–87 (AVI) contribute to the 5-amino-6-(D-ribitylamino)uracil site. Residue 90 to 91 (DT) participates in (2S)-2-hydroxy-3-oxobutyl phosphate binding. The active-site Proton donor is the His93. 5-amino-6-(D-ribitylamino)uracil is bound at residue Phe118. Arg132 contacts (2S)-2-hydroxy-3-oxobutyl phosphate.

Belongs to the DMRL synthase family.

The catalysed reaction is (2S)-2-hydroxy-3-oxobutyl phosphate + 5-amino-6-(D-ribitylamino)uracil = 6,7-dimethyl-8-(1-D-ribityl)lumazine + phosphate + 2 H2O + H(+). Its pathway is cofactor biosynthesis; riboflavin biosynthesis; riboflavin from 2-hydroxy-3-oxobutyl phosphate and 5-amino-6-(D-ribitylamino)uracil: step 1/2. In terms of biological role, catalyzes the formation of 6,7-dimethyl-8-ribityllumazine by condensation of 5-amino-6-(D-ribitylamino)uracil with 3,4-dihydroxy-2-butanone 4-phosphate. This is the penultimate step in the biosynthesis of riboflavin. This is 6,7-dimethyl-8-ribityllumazine synthase from Synechococcus sp. (strain RCC307).